Consider the following 457-residue polypeptide: Multidrug resistance protein MdtK (457 aa).

12 helical membrane-spanning segments follow: residues 11–31 (LLAL…MGVV), 46–66 (AVAV…GLLL), 93–113 (WLAL…DHVI), 127–147 (AVGF…FQVL), 160–180 (GMVI…IFIY), 188–208 (LGGV…FLMM), 243–263 (LPVA…ALLV), 283–301 (LMFM…RVGF), 316–336 (YTSM…TIVF), 357–377 (LMLL…GSGV), 387–407 (IFFI…YLLG), and 418–438 (PAGF…LMVL).

It belongs to the multi antimicrobial extrusion (MATE) (TC 2.A.66.1) family. MdtK subfamily.

Its subcellular location is the cell inner membrane. Its function is as follows. Multidrug efflux pump that functions probably as a Na(+)/drug antiporter. The sequence is that of Multidrug resistance protein MdtK from Yersinia pseudotuberculosis serotype O:1b (strain IP 31758).